A 120-amino-acid chain; its full sequence is Large ribosomal subunit protein bL19 (120 aa).

Belongs to the bacterial ribosomal protein bL19 family.

This protein is located at the 30S-50S ribosomal subunit interface and may play a role in the structure and function of the aminoacyl-tRNA binding site. This chain is Large ribosomal subunit protein bL19, found in Geobacillus kaustophilus (strain HTA426).